A 38-amino-acid polypeptide reads, in one-letter code: Putative ORF10 protein (38 aa).

As to quaternary structure, binds host ZYG11B. This would not play any role in SARS-CoV-2 infection.

The protein is Putative ORF10 protein of Severe acute respiratory syndrome coronavirus 2 (2019-nCoV).